Consider the following 72-residue polypeptide: Peptide Ctri9194 (72 aa).

The first 23 residues, 1–23 (MKTQNVLLSFGIVFLMISFSSET), serve as a signal peptide directing secretion. Isoleucine amide is present on I38. Residues 42–72 (SLKDVESLDFLFDPTFTAADLAVLENALEDY) constitute a propeptide that is removed on maturation.

It belongs to the non-disulfide-bridged peptide (NDBP) superfamily. Short antimicrobial peptide (group 4) family. As to expression, expressed by the venom gland.

The protein localises to the secreted. Antimicrobial peptide. This chain is Peptide Ctri9194, found in Chaerilus tricostatus (Scorpion).